Reading from the N-terminus, the 599-residue chain is Aspartate--tRNA(Asp/Asn) ligase (599 aa).

Residue glutamate 180 participates in L-aspartate binding. Residues 204–207 (QLLK) form an aspartate region. Arginine 226 contacts L-aspartate. ATP-binding positions include 226-228 (RDE) and glutamine 235. Histidine 457 is a binding site for L-aspartate. Glutamate 491 is a binding site for ATP. Residue arginine 498 coordinates L-aspartate. 543–546 (GWDR) provides a ligand contact to ATP. The segment at 565–599 (KAGGGRDPLTGAPAPISDEQRAETGVDYDPDADEN) is disordered. A compositionally biased stretch (acidic residues) spans 590-599 (VDYDPDADEN).

This sequence belongs to the class-II aminoacyl-tRNA synthetase family. Type 1 subfamily. As to quaternary structure, homodimer.

It is found in the cytoplasm. It catalyses the reaction tRNA(Asx) + L-aspartate + ATP = L-aspartyl-tRNA(Asx) + AMP + diphosphate. Its function is as follows. Aspartyl-tRNA synthetase with relaxed tRNA specificity since it is able to aspartylate not only its cognate tRNA(Asp) but also tRNA(Asn). Reaction proceeds in two steps: L-aspartate is first activated by ATP to form Asp-AMP and then transferred to the acceptor end of tRNA(Asp/Asn). The chain is Aspartate--tRNA(Asp/Asn) ligase from Bifidobacterium longum (strain DJO10A).